The chain runs to 1295 residues: Serine protease pet autotransporter (1295 aa).

A signal peptide spans M1–A52. Residues N54–E304 form the Peptidase S6 domain. Residues H124, D153, and S260 each act as charge relay system in the active site. Residues D1029–F1295 form the Autotransporter domain.

Post-translationally, cleaved to release the mature protein from the outer membrane.

It is found in the periplasm. The protein localises to the secreted. It localises to the cell surface. Its subcellular location is the cell outer membrane. With respect to regulation, inhibition of cytotoxic activity by phenylmethylsulfonyl fluoride. Functionally, serine protease with enterotoxic and cytotoxic activity. Internalization into the host cell is required for the induction of cytopathic effects. However, the serine activity is not necessary for secretion and internalization into the host cell. This chain is Serine protease pet autotransporter (pet), found in Escherichia coli O44:H18 (strain 042 / EAEC).